We begin with the raw amino-acid sequence, 1187 residues long: RNA helicase Mov10l1 (1187 aa).

The disordered stretch occupies residues 273–347 (RSKSCPGAAA…EPEPGGLIPP (75 aa)). Basic and acidic residues-rich tracts occupy residues 296 to 307 (HHREDKTDEIPE) and 322 to 339 (ACKE…KQEP). 5 consecutive repeat copies span residues 642–652 (TRNDSQSITNI), 653–663 (IRNDGQSITNV), 664–674 (TRNDGQPITKV), 675–685 (TRNNSQSITNI), and 686–696 (TRNDGQPITKN). The segment at 642 to 696 (TRNDSQSITNIIRNDGQSITNVTRNDGQPITKVTRNNSQSITNITRNDGQPITKN) is 5 X 11 AA tandem repeats of [TI]-R-N-[DN]-[GS]-Q-[SP]-I-T-[NK]-[IVN]. The interval 686–727 (TRNDGQPITKNKKTVKDQTKHTTEERHVGTTDQPEKASSTAE) is disordered. Residues 699–720 (TVKDQTKHTTEERHVGTTDQPE) show a composition bias toward basic and acidic residues. Position 772-779 (772-779 (GPPGTGKT)) interacts with ATP. The DEAG box motif lies at 888-891 (DEAG).

Belongs to the DNA2/NAM7 helicase family. SDE3 subfamily. In terms of assembly, interacts with PIWIL1. Interacts with PIWIL2. Interacts with PIWIL4. Interacts with HSPA2. Interacts with PLD6. As to expression, isoform 1: Specifically expressed in testis. Isoform 1: In testis, present in pachytene spermatocytes but absent in postmeiotic spermatids (at protein level). Isoform 2: Present in cardiomyocytes (at protein level). Isoform 2: Heart specific. Isoform 3: Heart specific and is specifically expressed in cardiac myocytes.

It localises to the cytoplasm. The catalysed reaction is ATP + H2O = ADP + phosphate + H(+). ATP-dependent RNA helicase required during spermatogenesis to repress transposable elements and prevent their mobilization, which is essential for germline integrity. Acts via the piRNA metabolic process, which mediates the repression of transposable elements during meiosis by forming complexes composed of piRNAs and Piwi proteins and governs the methylation and subsequent repression of transposons. Involved in the primary piRNA metabolic process. Specifically binds to piRNA precursors and promotes the generation of intermediate piRNA processing fragments that are subsequently loaded to Piwi proteins. Acts via its ATP-dependent RNA helicase activity: displays 5'-3' RNA unwinding activity and probably mediates unwinding and funneling of single-stranded piRNA precursor transcripts to the endonuclease that catalyzes the first cleavage step of piRNA processing to generate piRNA intermediate fragments that are subsequently loaded to Piwi proteins. Its function is as follows. May act downstream of MEF2C during heart formation. Acts as a cardiac-specific suppressor of cardiomyocyte hypertrophy and cell cycle progression, suggesting that it may suppress these processes through the regulation of CDKN1A. Such results however require additional evidence. This is RNA helicase Mov10l1 from Mus musculus (Mouse).